The primary structure comprises 267 residues: MKKILLTNDDGYHAKGIKALEQALEEMAEIYVVAPKHEKSACSQCITITAPLRAEKIKGKEGRHYRIDDGTPSDCVYLAINELFKHVCFDLVISGINLGSNMGEDTIYSGTVAGAIEGTIQGVPSIAISQILSNKNKNTPLSFDLAQKIIQDLVQNIFTKGYPLKGRKLLNVNVPNCSLQEYQGERITPKGYRLYKKEVHKRTDPKNESYFWLGLHPLEWQKRENEDRLSDFDAIASNHASITPLNLDLTSYDDLKSLESWHEGMLK.

D9, D10, S40, and N97 together coordinate a divalent metal cation.

The protein belongs to the SurE nucleotidase family. A divalent metal cation is required as a cofactor.

It is found in the cytoplasm. The enzyme catalyses a ribonucleoside 5'-phosphate + H2O = a ribonucleoside + phosphate. Its function is as follows. Nucleotidase that shows phosphatase activity on nucleoside 5'-monophosphates. The polypeptide is 5'-nucleotidase SurE (Helicobacter pylori (strain ATCC 700392 / 26695) (Campylobacter pylori)).